Consider the following 216-residue polypeptide: Pyrophosphatase PpaX (216 aa).

D9 serves as the catalytic Nucleophile.

It belongs to the HAD-like hydrolase superfamily. PpaX family. Mg(2+) serves as cofactor.

The catalysed reaction is diphosphate + H2O = 2 phosphate + H(+). Functionally, hydrolyzes pyrophosphate formed during P-Ser-HPr dephosphorylation by HPrK/P. Might play a role in controlling the intracellular pyrophosphate pool. The chain is Pyrophosphatase PpaX from Bacillus anthracis (strain A0248).